Consider the following 197-residue polypeptide: Fe/S biogenesis protein NfuA (197 aa).

The [4Fe-4S] cluster site is built by Cys-155 and Cys-158.

This sequence belongs to the NfuA family. Homodimer. It depends on [4Fe-4S] cluster as a cofactor.

Functionally, involved in iron-sulfur cluster biogenesis. Binds a 4Fe-4S cluster, can transfer this cluster to apoproteins, and thereby intervenes in the maturation of Fe/S proteins. Could also act as a scaffold/chaperone for damaged Fe/S proteins. The protein is Fe/S biogenesis protein NfuA of Pseudomonas syringae pv. syringae (strain B728a).